The sequence spans 196 residues: SAGA-associated factor 11 homolog (196 aa).

Residues 1 to 22 (MSAANMPTTTGAQGSGNQVPTT) are disordered. Residues 106–127 (CTCPNCDRLVAAARFAPHLEKC) form an SGF11-type zinc finger. The interval 141–196 (RLATKEGATSAHLHSSGNTGGTDDEDDVDWSSDKRRKKSNQNSRNNGSKKNNGKTF) is disordered. At Ser172 the chain carries Phosphoserine. The segment covering 180 to 196 (NQNSRNNGSKKNNGKTF) has biased composition (low complexity).

This sequence belongs to the SGF11 family. Component of some SAGA transcription coactivator-HAT complexes, at least composed of Ada2b, not/nonstop, Pcaf/Gcn5, Sgf11 and Spt3. Within the SAGA complex, Sgf11, e(y)2, and not/nonstop form an additional subcomplex of SAGA called the DUB module (deubiquitination module). Interacts directly with not/nonstop. Interacts with the AMEX complex component xmas-2. Interacts with Cbp80; important for promoter recruitment of Sgf11 that is not associated with the DUB module.

The protein localises to the nucleus. The protein resides in the nucleoplasm. Its subcellular location is the cytoplasm. In terms of biological role, component of the transcription regulatory histone acetylation (HAT) complex SAGA, a multiprotein complex that activates transcription by remodeling chromatin and mediating histone acetylation and deubiquitination. Within the SAGA complex, participates in a subcomplex that specifically deubiquitinates histone H2B. The SAGA complex is recruited to specific gene promoters by activators, where it is required for transcription. Required for nuclear receptor-mediated transactivation. Binds independently on SAGA to promoters in an RNA-dependent manner. Binds to mRNA and is essential for total mRNA export from the nucleus. Required to counteract heterochromatin silencing. Controls the development of neuronal connectivity in visual system by being required for accurate axon targeting in the optic lobe. Required for expression of ecdysone-induced genes such as br/broad. In Drosophila simulans (Fruit fly), this protein is SAGA-associated factor 11 homolog.